The primary structure comprises 171 residues: Small ribosomal subunit protein uS5 (171 aa).

The S5 DRBM domain occupies 16 to 79 (LREKMISVNR…EEARRKLVKI (64 aa)).

It belongs to the universal ribosomal protein uS5 family. As to quaternary structure, part of the 30S ribosomal subunit. Contacts proteins S4 and S8.

With S4 and S12 plays an important role in translational accuracy. In terms of biological role, located at the back of the 30S subunit body where it stabilizes the conformation of the head with respect to the body. This chain is Small ribosomal subunit protein uS5, found in Thiobacillus denitrificans (strain ATCC 25259 / T1).